The primary structure comprises 263 residues: Eukaryotic translation initiation factor 3 subunit J-B (263 aa).

Residues 1–13 show a composition bias toward low complexity; it reads MAAAAAAAAAAAA. Residues 1–115 are disordered; the sequence is MAAAAAAAAA…EPEESKVLTP (115 aa). The residue at position 2 (alanine 2) is an N-acetylalanine. Positions 6–74 are sufficient for interaction with EIF3B; sequence AAAAAAAAGD…KEEAEVKPEV (69 aa). Residues serine 16, serine 18, and serine 25 each carry the phosphoserine modification. The segment covering 45 to 66 has biased composition (acidic residues); that stretch reads EGEDEDEDVKDNWDDDDDENKE. A compositionally biased stretch (basic and acidic residues) spans 67–111; sequence EAEVKPEVKISEKKKIAEKIKEKERQQKKRQEEIKKRLEEPEESK. Residues 75-140 adopt a coiled-coil conformation; it reads KISEKKKIAE…ESDLELAKET (66 aa). A Glycyl lysine isopeptide (Lys-Gly) (interchain with G-Cter in SUMO2) cross-link involves residue lysine 111. Threonine 114 carries the phosphothreonine modification. Serine 132 is modified (phosphoserine). The interval 248–263 is promotes stable association with the 40S ribosome; the sequence is YGGYEGGYVQDYEDFM. Tyrosine 259 bears the Phosphotyrosine mark.

This sequence belongs to the eIF-3 subunit J family. In terms of assembly, component of the eukaryotic translation initiation factor 3 (eIF-3) complex, which is composed of 13 subunits: EIF3A, EIF3B, EIF3C, EIF3D, EIF3E, EIF3F, EIF3G, EIF3H, EIF3I, EIF3J, EIF3K, EIF3L and EIF3M. The eIF-3 complex appears to include 3 stable modules: module A is composed of EIF3A, EIF3B, EIF3G and EIF3I; module B is composed of EIF3F, EIF3H, and EIF3M; and module C is composed of EIF3C, EIF3D, EIF3E, EIF3K and EIF3L. EIF3C of module C binds EIF3B of module A and EIF3H of module B, thereby linking the three modules. EIF3J is a labile subunit that binds to the eIF-3 complex via EIF3B. The eIF-3 complex interacts with RPS6KB1 under conditions of nutrient depletion. Mitogenic stimulation leads to binding and activation of a complex composed of MTOR and RPTOR, leading to phosphorylation and release of RPS6KB1 and binding of EIF4B to eIF-3. In terms of processing, phosphorylated. Phosphorylation is enhanced upon serum stimulation.

It localises to the cytoplasm. Component of the eukaryotic translation initiation factor 3 (eIF-3) complex, which is required for several steps in the initiation of protein synthesis. The eIF-3 complex associates with the 40S ribosome and facilitates the recruitment of eIF-1, eIF-1A, eIF-2:GTP:methionyl-tRNAi and eIF-5 to form the 43S pre-initiation complex (43S PIC). The eIF-3 complex stimulates mRNA recruitment to the 43S PIC and scanning of the mRNA for AUG recognition. The eIF-3 complex is also required for disassembly and recycling of post-termination ribosomal complexes and subsequently prevents premature joining of the 40S and 60S ribosomal subunits prior to initiation. The eIF-3 complex specifically targets and initiates translation of a subset of mRNAs involved in cell proliferation, including cell cycling, differentiation and apoptosis, and uses different modes of RNA stem-loop binding to exert either translational activation or repression. This subunit binds directly within the mRNA entry channel of the 40S ribosome to the aminoacyl (A) site. It may regulate the interaction between the 43S PIC and mRNA. The chain is Eukaryotic translation initiation factor 3 subunit J-B (Eif3j2) from Mus musculus (Mouse).